Consider the following 541-residue polypeptide: Apolipoprotein N-acyltransferase (541 aa).

Helical transmembrane passes span 21-41 (LSGF…WYSL), 54-74 (LFVS…SWML), 82-102 (LIYL…SGFS), 116-136 (FLWS…YGIF), 157-177 (FGGF…NMSF), and 189-209 (MLWV…YEYL). Positions 220-499 (LRVAVVQPAH…SGVLETSLPL (280 aa)) constitute a CN hydrolase domain. The active-site Proton acceptor is the Glu264. Residue Lys349 is part of the active site. Cys404 serves as the catalytic Nucleophile. Residues 512–532 (YPMILIAFCAVSYLGGGFLGY) traverse the membrane as a helical segment.

The protein belongs to the CN hydrolase family. Apolipoprotein N-acyltransferase subfamily.

It localises to the cell inner membrane. The enzyme catalyses N-terminal S-1,2-diacyl-sn-glyceryl-L-cysteinyl-[lipoprotein] + a glycerophospholipid = N-acyl-S-1,2-diacyl-sn-glyceryl-L-cysteinyl-[lipoprotein] + a 2-acyl-sn-glycero-3-phospholipid + H(+). Its pathway is protein modification; lipoprotein biosynthesis (N-acyl transfer). Catalyzes the phospholipid dependent N-acylation of the N-terminal cysteine of apolipoprotein, the last step in lipoprotein maturation. This is Apolipoprotein N-acyltransferase from Chlamydia pneumoniae (Chlamydophila pneumoniae).